Here is a 159-residue protein sequence, read N- to C-terminus: UPF0262 protein CCNA_02430 (159 aa).

This sequence belongs to the UPF0262 family.

This chain is UPF0262 protein CCNA_02430, found in Caulobacter vibrioides (strain NA1000 / CB15N) (Caulobacter crescentus).